The sequence spans 129 residues: Glycine cleavage system H protein (129 aa).

The 83-residue stretch at 24-106 folds into the Lipoyl-binding domain; it reads SYTVGISEHA…FGDGWFFRVM (83 aa). N6-lipoyllysine is present on lysine 65.

Belongs to the GcvH family. In terms of assembly, the glycine cleavage system is composed of four proteins: P, T, L and H. It depends on (R)-lipoate as a cofactor.

The glycine cleavage system catalyzes the degradation of glycine. The H protein shuttles the methylamine group of glycine from the P protein to the T protein. This is Glycine cleavage system H protein from Shewanella woodyi (strain ATCC 51908 / MS32).